A 762-amino-acid polypeptide reads, in one-letter code: 1-phosphatidylinositol 4,5-bisphosphate phosphodiesterase delta-4 (762 aa).

Positions 16 to 124 (LLMQEGMPMR…WMRGLQLLVD (109 aa)) constitute a PH domain. The tract at residues 26-53 (KVRSKSWKKLRYFRLQNDGMTVWHARQA) is substrate binding. EF-hand domains are found at residues 134–169 (RLDQWLSDWFQRGDKNQDGKMSFQEVQRLLHLMNVE), 170–205 (MDQEYAFSLFQAADTSQSGTLEGEEFVQFYKALTKR), and 206–237 (AEVQELFESFSADGQKLTLLEFLDFLREEQKE). Ca(2+) contacts are provided by D147, N149, D151, K153, E158, D183, S185, S187, T189, and E194. The GBA motif lies at 213 to 243 (ESFSADGQKLTLLEFLDFLREEQKERDCTSE). The PI-PLC X-box domain occupies 290 to 435 (QDMTQPLNHY…LRRRILVKGK (146 aa)). Residue H305 is part of the active site. Ca(2+) is bound by residues N306, E335, and D337. H350 is a catalytic residue. E384 provides a ligand contact to Ca(2+). 2 residues coordinate substrate: K433 and K435. The segment covering 443–471 (LEYEEEEAEPELEESELALESQFETEPEP) has biased composition (acidic residues). Residues 443–483 (LEYEEEEAEPELEESELALESQFETEPEPQEQNLQSKDKKK) are disordered. Residue S457 is modified to Phosphoserine. In terms of domain architecture, PI-PLC Y-box spans 493–609 (LSSLVIYLKS…GYVLKPDFLR (117 aa)). Substrate is bound by residues S522 and R549. The C2 domain occupies 609–736 (RDIQSSFHPE…QGYRHIHLLS (128 aa)). Positions 650, 652, 676, 705, 706, and 707 each coordinate Ca(2+). The PDZ-binding signature appears at 731 to 734 (HIHL).

Interacts with GRIP1. Interacts (via GBA motif) with guanine nucleotide-binding protein G(i) alpha subunit GNAI3 (inactive GDP-bound form); low-affinity interaction. Ca(2+) is required as a cofactor.

It is found in the membrane. The protein resides in the nucleus. The protein localises to the cytoplasm. Its subcellular location is the endoplasmic reticulum. The catalysed reaction is a 1,2-diacyl-sn-glycero-3-phospho-(1D-myo-inositol-4,5-bisphosphate) + H2O = 1D-myo-inositol 1,4,5-trisphosphate + a 1,2-diacyl-sn-glycerol + H(+). It carries out the reaction a 1,2-diacyl-sn-glycero-3-phospho-(1D-myo-inositol) + H2O = 1D-myo-inositol 1-phosphate + a 1,2-diacyl-sn-glycerol + H(+). Its function is as follows. Hydrolyzes the phosphatidylinositol 4,5-bisphosphate (PIP2) to generate 2 second messenger molecules diacylglycerol (DAG) and inositol 1,4,5-trisphosphate (IP3). DAG mediates the activation of protein kinase C (PKC), while IP3 releases Ca(2+) from intracellular stores. Required for acrosome reaction in sperm during fertilization, probably by acting as an important enzyme for intracellular Ca(2+) mobilization in the zona pellucida-induced acrosome reaction. May play a role in cell growth. Modulates the liver regeneration in cooperation with nuclear PKC. Overexpression up-regulates the Erk signaling pathway and proliferation. The protein is 1-phosphatidylinositol 4,5-bisphosphate phosphodiesterase delta-4 (PLCD4) of Pongo abelii (Sumatran orangutan).